Here is a 170-residue protein sequence, read N- to C-terminus: Ureidoglycolate lyase (170 aa).

This sequence belongs to the ureidoglycolate lyase family. In terms of assembly, homodimer. Ni(2+) serves as cofactor.

It catalyses the reaction (S)-ureidoglycolate = urea + glyoxylate. It functions in the pathway nitrogen metabolism; (S)-allantoin degradation. Functionally, catalyzes the catabolism of the allantoin degradation intermediate (S)-ureidoglycolate, generating urea and glyoxylate. Involved in the utilization of allantoin as nitrogen source. In Stutzerimonas stutzeri (strain A1501) (Pseudomonas stutzeri), this protein is Ureidoglycolate lyase.